The primary structure comprises 313 residues: RHOMBOID-like protein 7 (313 aa).

Residues 1–11 are compositionally biased toward acidic residues; the sequence is MLSTAAEEDPE. Residues 1–24 are disordered; that stretch reads MLSTAAEEDPEGGSRETNNGGETT. Polar residues predominate over residues 15–24; the sequence is RETNNGGETT. 7 consecutive transmembrane segments (helical) span residues 31 to 51, 112 to 132, 143 to 163, 166 to 186, 196 to 216, 221 to 241, and 269 to 289; these read SWIIPIVVIANVVVFVVVMYY, WLHAGVIHLLANMCCVAYIGV, VGTIYLVSGFCGSILSCLFLE, ISVGASSALFGLLGAMLSELL, GVAIVMLLVIVGVNLGLGTLP, FAHIGGFFGGFLLGFLLLIHP, and LCIVASIVFVAGFTSGLVILF. The Nucleophile role is filled by Ser-171. The active-site Charge relay system is His-223.

The protein belongs to the peptidase S54 family.

The protein localises to the membrane. It carries out the reaction Cleaves type-1 transmembrane domains using a catalytic dyad composed of serine and histidine that are contributed by different transmembrane domains.. Its function is as follows. Probable rhomboid-type serine protease that catalyzes intramembrane proteolysis. May function in embryo development. The chain is RHOMBOID-like protein 7 from Arabidopsis thaliana (Mouse-ear cress).